Reading from the N-terminus, the 236-residue chain is Ribosome assembly factor MRT4 (236 aa).

Belongs to the universal ribosomal protein uL10 family. As to quaternary structure, associates with the pre-60S ribosomal particle.

The protein localises to the nucleus. Its subcellular location is the nucleolus. It localises to the cytoplasm. In terms of biological role, component of the ribosome assembly machinery. Nuclear paralog of the ribosomal protein P0, it binds pre-60S subunits at an early stage of assembly in the nucleolus, and is replaced by P0 in cytoplasmic pre-60S subunits and mature 80S ribosomes. This Saccharomyces cerevisiae (strain ATCC 204508 / S288c) (Baker's yeast) protein is Ribosome assembly factor MRT4.